A 103-amino-acid chain; its full sequence is Small ribosomal subunit protein uS10 (103 aa).

It belongs to the universal ribosomal protein uS10 family. In terms of assembly, part of the 30S ribosomal subunit.

Its function is as follows. Involved in the binding of tRNA to the ribosomes. This Baumannia cicadellinicola subsp. Homalodisca coagulata protein is Small ribosomal subunit protein uS10.